The sequence spans 155 residues: Endoribonuclease YbeY (155 aa).

Residues His116, His120, and His126 each coordinate Zn(2+).

The protein belongs to the endoribonuclease YbeY family. The cofactor is Zn(2+).

The protein localises to the cytoplasm. Single strand-specific metallo-endoribonuclease involved in late-stage 70S ribosome quality control and in maturation of the 3' terminus of the 16S rRNA. The polypeptide is Endoribonuclease YbeY (Colwellia psychrerythraea (strain 34H / ATCC BAA-681) (Vibrio psychroerythus)).